The chain runs to 95 residues: Small ribosomal subunit protein uS17 (95 aa).

It belongs to the universal ribosomal protein uS17 family. In terms of assembly, part of the 30S ribosomal subunit.

Functionally, one of the primary rRNA binding proteins, it binds specifically to the 5'-end of 16S ribosomal RNA. This is Small ribosomal subunit protein uS17 from Synechococcus sp. (strain CC9902).